A 137-amino-acid polypeptide reads, in one-letter code: Phosphoribosyl-AMP cyclohydrolase (137 aa).

D84 is a Mg(2+) binding site. C85 serves as a coordination point for Zn(2+). Positions 86 and 88 each coordinate Mg(2+). Positions 101 and 108 each coordinate Zn(2+).

Belongs to the PRA-CH family. As to quaternary structure, homodimer. It depends on Mg(2+) as a cofactor. The cofactor is Zn(2+).

It localises to the cytoplasm. The enzyme catalyses 1-(5-phospho-beta-D-ribosyl)-5'-AMP + H2O = 1-(5-phospho-beta-D-ribosyl)-5-[(5-phospho-beta-D-ribosylamino)methylideneamino]imidazole-4-carboxamide. The protein operates within amino-acid biosynthesis; L-histidine biosynthesis; L-histidine from 5-phospho-alpha-D-ribose 1-diphosphate: step 3/9. Its function is as follows. Catalyzes the hydrolysis of the adenine ring of phosphoribosyl-AMP. The sequence is that of Phosphoribosyl-AMP cyclohydrolase from Chlorobium phaeobacteroides (strain DSM 266 / SMG 266 / 2430).